The following is a 187-amino-acid chain: Elongation factor P (187 aa).

The protein belongs to the elongation factor P family.

It localises to the cytoplasm. It functions in the pathway protein biosynthesis; polypeptide chain elongation. Functionally, involved in peptide bond synthesis. Stimulates efficient translation and peptide-bond synthesis on native or reconstituted 70S ribosomes in vitro. Probably functions indirectly by altering the affinity of the ribosome for aminoacyl-tRNA, thus increasing their reactivity as acceptors for peptidyl transferase. The chain is Elongation factor P from Zymomonas mobilis subsp. mobilis (strain ATCC 31821 / ZM4 / CP4).